The primary structure comprises 330 residues: Aspartate--ammonia ligase (330 aa).

The protein belongs to the class-II aminoacyl-tRNA synthetase family. AsnA subfamily.

It is found in the cytoplasm. It carries out the reaction L-aspartate + NH4(+) + ATP = L-asparagine + AMP + diphosphate + H(+). It functions in the pathway amino-acid biosynthesis; L-asparagine biosynthesis; L-asparagine from L-aspartate (ammonia route): step 1/1. The chain is Aspartate--ammonia ligase from Streptococcus pyogenes serotype M1.